An 850-amino-acid polypeptide reads, in one-letter code: AdoMet-dependent rRNA methyltransferase SPB1 (850 aa).

S-adenosyl-L-methionine contacts are provided by glycine 58, tryptophan 60, aspartate 78, aspartate 94, and aspartate 119. Lysine 159 functions as the Proton acceptor in the catalytic mechanism. Positions 273–282 (GETNEMTWTP) are enriched in polar residues. Disordered stretches follow at residues 273–305 (GETN…ARDE), 388–414 (IDKE…NEMK), 529–569 (GISD…RTLN), and 620–646 (AKKN…KQDD). A compositionally biased stretch (basic and acidic residues) spans 388–400 (IDKELSELGEREK). A coiled-coil region spans residues 397-425 (EREKARKKRERRRRNEMKQREIQRMQMNM). Positions 401–411 (ARKKRERRRRN) are enriched in basic residues. 2 stretches are compositionally biased toward acidic residues: residues 537–561 (DESD…DEDD) and 628–638 (SDSEDEEDDIV). Positions 746–773 (LEAKGRKKMRALRRLEQMKKKSELINED) form a coiled coil. The interval 811–850 (KNKGIAGRPRGVTGKYKMVDGTMKKEQRAIRRIKKKMGKK) is disordered. A compositionally biased stretch (basic residues) spans 840-850 (IRRIKKKMGKK).

Belongs to the class I-like SAM-binding methyltransferase superfamily. RNA methyltransferase RlmE family. SPB1 subfamily. In terms of assembly, component of the nucleolar and nucleoplasmic pre-60S ribosomal particle.

Its subcellular location is the nucleus. The protein resides in the nucleolus. It carries out the reaction a ribonucleotide in rRNA + S-adenosyl-L-methionine = a 2'-O-methylribonucleotide in rRNA + S-adenosyl-L-homocysteine + H(+). In terms of biological role, required for proper assembly of pre-ribosomal particles during the biogenesis of the 60S ribosomal subunit. The protein is AdoMet-dependent rRNA methyltransferase SPB1 of Yarrowia lipolytica (strain CLIB 122 / E 150) (Yeast).